The primary structure comprises 341 residues: Ribose-phosphate pyrophosphokinase 5 (341 aa).

Mg(2+)-binding residues include Asp152, His154, and Asp167.

This sequence belongs to the ribose-phosphate pyrophosphokinase family.

It is found in the cytoplasm. The catalysed reaction is D-ribose 5-phosphate + ATP = 5-phospho-alpha-D-ribose 1-diphosphate + AMP + H(+). Its pathway is metabolic intermediate biosynthesis; 5-phospho-alpha-D-ribose 1-diphosphate biosynthesis; 5-phospho-alpha-D-ribose 1-diphosphate from D-ribose 5-phosphate (route I): step 1/1. 5-phosphoribose 1-diphosphate synthase involved in nucleotide, histidine, and tryptophan biosynthesis. Active in heteromultimeric complexes with other 5-phosphoribose 1-diphosphate synthases. The sequence is that of Ribose-phosphate pyrophosphokinase 5 from Schizosaccharomyces pombe (strain 972 / ATCC 24843) (Fission yeast).